Reading from the N-terminus, the 617-residue chain is Pyrophosphate--fructose 6-phosphate 1-phosphotransferase subunit alpha 2 (617 aa).

The protein belongs to the phosphofructokinase type A (PFKA) family. PPi-dependent PFK group II subfamily. Clade 'Long' sub-subfamily. In terms of assembly, tetramer of two alpha (regulatory) and two beta (catalytic) chains. As to expression, expressed in roots and specific parts such as the trichomes of leaves, cotyledon veins, as well as in stamen and gynoecium of flowers.

It is found in the cytoplasm. It participates in carbohydrate degradation; glycolysis; D-glyceraldehyde 3-phosphate and glycerone phosphate from D-glucose: step 3/4. With respect to regulation, allosterically activated by fructose 2,6-bisphosphate. Functionally, regulatory subunit of pyrophosphate--fructose 6-phosphate 1-phosphotransferase. The polypeptide is Pyrophosphate--fructose 6-phosphate 1-phosphotransferase subunit alpha 2 (Arabidopsis thaliana (Mouse-ear cress)).